Consider the following 283-residue polypeptide: Release factor glutamine methyltransferase (283 aa).

Positions 143 and 189 each coordinate S-adenosyl-L-methionine. A substrate-binding site is contributed by 189–192; that stretch reads NPPY.

The protein belongs to the protein N5-glutamine methyltransferase family. PrmC subfamily.

The enzyme catalyses L-glutaminyl-[peptide chain release factor] + S-adenosyl-L-methionine = N(5)-methyl-L-glutaminyl-[peptide chain release factor] + S-adenosyl-L-homocysteine + H(+). Its function is as follows. Methylates the class 1 translation termination release factors RF1/PrfA and RF2/PrfB on the glutamine residue of the universally conserved GGQ motif. The chain is Release factor glutamine methyltransferase from Clostridium botulinum (strain Hall / ATCC 3502 / NCTC 13319 / Type A).